We begin with the raw amino-acid sequence, 228 residues long: Cutinase (228 aa).

Positions 1–16 (MKFLSIISLAVSLVAA) are cleaved as a signal peptide. A disulfide bridge links cysteine 49 with cysteine 129. Residue serine 140 is the Nucleophile of the active site. Cysteine 191 and cysteine 198 are oxidised to a cystine. Residue aspartate 195 is part of the active site. The active-site Proton donor/acceptor is the histidine 208.

It belongs to the cutinase family. Post-translationally, the 2 disulfide bonds play a critical role in holding the catalytic residues in juxta-position; reduction of the disulfide bridges results in the complete inactivation of the enzyme.

Its subcellular location is the secreted. It carries out the reaction cutin + H2O = cutin monomers.. With respect to regulation, partially inhibited by berberine; higher inhibitory effects are observed with longer chain polyester substrates. Its function is as follows. Catalyzes the hydrolysis of complex carboxylic polyesters found in the cell wall of plants. Degrades cutin, a macromolecule that forms the structure of the plant cuticle. Allows pathogenic fungi to penetrate through the cuticular barrier into the host plant during the initial stage of fungal infection. The chain is Cutinase (CUTA) from Colletotrichum truncatum (Anthracnose fungus).